The primary structure comprises 267 residues: Hydroxyethylthiazole kinase 2 (267 aa).

Residue Met41 participates in substrate binding. ATP is bound by residues Lys116 and Thr166. Residue Gly193 participates in substrate binding.

This sequence belongs to the Thz kinase family. It depends on Mg(2+) as a cofactor.

The catalysed reaction is 5-(2-hydroxyethyl)-4-methylthiazole + ATP = 4-methyl-5-(2-phosphooxyethyl)-thiazole + ADP + H(+). It participates in cofactor biosynthesis; thiamine diphosphate biosynthesis; 4-methyl-5-(2-phosphoethyl)-thiazole from 5-(2-hydroxyethyl)-4-methylthiazole: step 1/1. Functionally, catalyzes the phosphorylation of the hydroxyl group of 4-methyl-5-beta-hydroxyethylthiazole (THZ). The polypeptide is Hydroxyethylthiazole kinase 2 (Streptococcus pneumoniae (strain P1031)).